A 227-amino-acid polypeptide reads, in one-letter code: Ribonuclease 3 (227 aa).

The RNase III domain maps to 6–128; that stretch reads ASDYQQRIGY…VIAAIYLDAD (123 aa). Residue Glu-41 participates in Mg(2+) binding. Asp-45 is an active-site residue. 2 residues coordinate Mg(2+): Asp-114 and Glu-117. Residue Glu-117 is part of the active site. Residues 155–225 enclose the DRBM domain; the sequence is DPKTRLQEWL…ASHAINQLDS (71 aa). Residues 203–212 show a composition bias toward basic and acidic residues; sequence GEGSSRRLAE. The tract at residues 203–227 is disordered; it reads GEGSSRRLAEQDAASHAINQLDSNK.

This sequence belongs to the ribonuclease III family. In terms of assembly, homodimer. The cofactor is Mg(2+).

The protein localises to the cytoplasm. It catalyses the reaction Endonucleolytic cleavage to 5'-phosphomonoester.. Its function is as follows. Digests double-stranded RNA. Involved in the processing of primary rRNA transcript to yield the immediate precursors to the large and small rRNAs (23S and 16S). Processes some mRNAs, and tRNAs when they are encoded in the rRNA operon. Processes pre-crRNA and tracrRNA of type II CRISPR loci if present in the organism. The sequence is that of Ribonuclease 3 from Xylella fastidiosa (strain M12).